The chain runs to 207 residues: Uracil phosphoribosyltransferase (207 aa).

5-phospho-alpha-D-ribose 1-diphosphate contacts are provided by residues arginine 77, arginine 102, and 129-137 (DPMLATGGS). Residues isoleucine 192 and 197–199 (GDA) contribute to the uracil site. Residue aspartate 198 coordinates 5-phospho-alpha-D-ribose 1-diphosphate.

Belongs to the UPRTase family. Mg(2+) is required as a cofactor.

It catalyses the reaction UMP + diphosphate = 5-phospho-alpha-D-ribose 1-diphosphate + uracil. It functions in the pathway pyrimidine metabolism; UMP biosynthesis via salvage pathway; UMP from uracil: step 1/1. With respect to regulation, allosterically activated by GTP. In terms of biological role, catalyzes the conversion of uracil and 5-phospho-alpha-D-ribose 1-diphosphate (PRPP) to UMP and diphosphate. This Ureaplasma urealyticum serovar 10 (strain ATCC 33699 / Western) protein is Uracil phosphoribosyltransferase.